The sequence spans 363 residues: MAPAGGPRVKKVILERLDSGEVVVGDGGFLFTLEKRGFVKAGLWTPEAVVEYPSAVRQLHTEFLRAGADVLQTFTFSAAEDRMESKWEAVNAAACDLAQEVADGGAALVAGGICQTSLYKYHKDETRIKNIFRLQLGVFARKNVDFLIAEYFEHVEEAVWAVEVLREVGAPVAVTMCIGPEGDMHGVTPGECAVRLSRAGANIIGVNCRFGPWTSLQTMKLMKEGLRDAGLQAHLMVQCLGFHTPDCGKGGFVDLPEYPFGLEPRVATRWDIQKYAREAYNLGVRYIGGCCGFEPYHIRAIAEELAPERGFLPPASEKHGIWGSGLDMHTKPWIRARARREYWETLLPASGRPFCPSLSKPDA.

Positions 11–305 constitute a Hcy-binding domain; sequence KVILERLDSG…YHIRAIAEEL (295 aa). 3 residues coordinate Zn(2+): Cys-208, Cys-290, and Cys-291.

In terms of assembly, homotetramer. Requires Zn(2+) as cofactor.

It catalyses the reaction S-methyl-L-methionine + L-homocysteine = 2 L-methionine + H(+). Its pathway is amino-acid biosynthesis; L-methionine biosynthesis via de novo pathway; L-methionine from L-homocysteine (BhmT route): step 1/1. Involved in the regulation of homocysteine metabolism. Converts betaine and homocysteine to dimethylglycine and methionine, respectively. This reaction is also required for the irreversible oxidation of choline. This chain is S-methylmethionine--homocysteine S-methyltransferase BHMT2 (Bhmt2), found in Rattus norvegicus (Rat).